A 194-amino-acid chain; its full sequence is 5-formyltetrahydrofolate cyclo-ligase (194 aa).

ATP contacts are provided by residues 6-10 (KSQLR), 139-146 (GRGAGFYD), and Asp177.

The protein belongs to the 5-formyltetrahydrofolate cyclo-ligase family.

It carries out the reaction (6S)-5-formyl-5,6,7,8-tetrahydrofolate + ATP = (6R)-5,10-methenyltetrahydrofolate + ADP + phosphate. The protein operates within one-carbon metabolism; tetrahydrofolate interconversion. Its function is as follows. Involved in the removal of 5-formyltetrahydrofolate. In vitro, it is a potent inhibitor of various folate-dependent enzymes in the C1 metabolism network and in vivo it might function as a folate storage. 5-formyltetrahydrofolate is also used as an antifolate rescue agent in cancer chemotherapy. Catalyzes the irreversible ATP-dependent transformation of 5-formyltetrahydrofolate (5-CHO-THF) to form 5,10-methenyltetrahydrofolate (5,10-CH=THF). The reverse reaction is catalyzed by the serine hydroxymethyltransferase GlyA (SHMT). This Mycolicibacterium smegmatis (strain ATCC 700084 / mc(2)155) (Mycobacterium smegmatis) protein is 5-formyltetrahydrofolate cyclo-ligase.